The chain runs to 2123 residues: Toxin Afp18 (2123 aa).

A disordered region spans residues 864-919; that stretch reads FFDNSDQDADQPRVRRKREMTDEIMLSDGSSRSEAKALPDENELDTDQSKSRPESA. The interval 1771–2123 is tyrosine glycosyltransferase; sequence VFDSANTNRS…GNSTQSSGLS (353 aa). Residues 1850 to 1852 and 1940 to 1941 each bind UDP-N-acetyl-alpha-D-glucosamine; these read IWV and SD. Residues Asp-1957 and Asp-1959 each contribute to the a divalent metal cation site. Residues 1957–1960 carry the DxDD motif motif; that stretch reads DIDD. Asn-1993 contributes to the UDP-N-acetyl-alpha-D-glucosamine binding site.

A divalent metal cation is required as a cofactor.

It localises to the secreted. It is found in the host cell membrane. The catalysed reaction is L-tyrosyl-[protein] + UDP-N-acetyl-alpha-D-glucosamine = O-(N-acetyl-alpha-D-glucosaminyl)-L-tyrosyl-[protein] + UDP + H(+). In terms of biological role, toxin component of the prophage tail-derived protein translocation system Afp, which is the causative agent of enteric redmouth disease in salmonid fish species. Mono-O-GlcNAcylates the small GTPase RhoA in eukaryotic host cells at Tyr-34, using UDP-N-acetylglucosamine (UDP-GlcNAc) as the sugar donor. Glycosylation of RhoA results in impaired effector and regulator interaction and inactivation of downstream RhoA signaling which leads to actin filament depolymerization and blocks cytokinesis and gastrulation during zebrafish embryo development. To a lesser extent, is also able to glycosylate other Rho family GTPases (RhoB, RhoC, Rac1, Rac2, Rac3, and Cdc42) in vitro at a switch I tyrosine residue, but not Ras proteins. This Yersinia ruckeri serotype O1 (strain ATCC 29473 / DSM 18506 / JCM 15110 / CCUG 14190 / NCIMB 2194 / NCTC 12986 / 2396-61) protein is Toxin Afp18.